Consider the following 515-residue polypeptide: Bifunctional purine biosynthesis protein PurH (515 aa).

The MGS-like domain occupies 1 to 145 (MTKRALISVS…KNHASVTVVV (145 aa)).

This sequence belongs to the PurH family.

It carries out the reaction (6R)-10-formyltetrahydrofolate + 5-amino-1-(5-phospho-beta-D-ribosyl)imidazole-4-carboxamide = 5-formamido-1-(5-phospho-D-ribosyl)imidazole-4-carboxamide + (6S)-5,6,7,8-tetrahydrofolate. The enzyme catalyses IMP + H2O = 5-formamido-1-(5-phospho-D-ribosyl)imidazole-4-carboxamide. It participates in purine metabolism; IMP biosynthesis via de novo pathway; 5-formamido-1-(5-phospho-D-ribosyl)imidazole-4-carboxamide from 5-amino-1-(5-phospho-D-ribosyl)imidazole-4-carboxamide (10-formyl THF route): step 1/1. It functions in the pathway purine metabolism; IMP biosynthesis via de novo pathway; IMP from 5-formamido-1-(5-phospho-D-ribosyl)imidazole-4-carboxamide: step 1/1. This is Bifunctional purine biosynthesis protein PurH from Streptococcus suis (strain 98HAH33).